A 545-amino-acid polypeptide reads, in one-letter code: Membrane protein insertase YidC (545 aa).

4 helical membrane-spanning segments follow: residues 350–370, 424–444, 461–481, and 498–518; these read IIGN…AVLY, LPML…FASV, ADPY…QTYL, and PLVF…YWVV.

The protein belongs to the OXA1/ALB3/YidC family. Type 1 subfamily. Interacts with the Sec translocase complex via SecD. Specifically interacts with transmembrane segments of nascent integral membrane proteins during membrane integration.

It localises to the cell inner membrane. In terms of biological role, required for the insertion and/or proper folding and/or complex formation of integral membrane proteins into the membrane. Involved in integration of membrane proteins that insert both dependently and independently of the Sec translocase complex, as well as at least some lipoproteins. Aids folding of multispanning membrane proteins. The protein is Membrane protein insertase YidC of Neisseria meningitidis serogroup B (strain ATCC BAA-335 / MC58).